The sequence spans 486 residues: Glutamyl-tRNA(Gln) amidotransferase subunit A (486 aa).

Residues K78 and S153 each act as charge relay system in the active site. S177 serves as the catalytic Acyl-ester intermediate.

Belongs to the amidase family. GatA subfamily. In terms of assembly, heterotrimer of A, B and C subunits.

It catalyses the reaction L-glutamyl-tRNA(Gln) + L-glutamine + ATP + H2O = L-glutaminyl-tRNA(Gln) + L-glutamate + ADP + phosphate + H(+). Allows the formation of correctly charged Gln-tRNA(Gln) through the transamidation of misacylated Glu-tRNA(Gln) in organisms which lack glutaminyl-tRNA synthetase. The reaction takes place in the presence of glutamine and ATP through an activated gamma-phospho-Glu-tRNA(Gln). The polypeptide is Glutamyl-tRNA(Gln) amidotransferase subunit A (Desulfosudis oleivorans (strain DSM 6200 / JCM 39069 / Hxd3) (Desulfococcus oleovorans)).